A 110-amino-acid polypeptide reads, in one-letter code: MFEKTNRMNLLFDFYQELLTTKQKAYVSFYYLDDYSLGEIAEEFEVSRQAIYDNIKRTEESLEKYEEKLGMLKKYQQREKLFTQLEAQLTKKNFLDEQVKDTLEQLKNID.

The protein belongs to the UPF0122 family.

Functionally, might take part in the signal recognition particle (SRP) pathway. This is inferred from the conservation of its genetic proximity to ftsY/ffh. May be a regulatory protein. The chain is UPF0122 protein lmo1802 from Listeria monocytogenes serovar 1/2a (strain ATCC BAA-679 / EGD-e).